A 1144-amino-acid polypeptide reads, in one-letter code: Formin-like protein 18 (1144 aa).

In terms of domain architecture, Phosphatase tensin-type spans 17 to 193 (LEISERVYVF…QYISRRNVGS (177 aa)). Cys-126 functions as the Phosphocysteine intermediate in the catalytic mechanism. Residues 199-338 (DQALTLDCVN…FSAEVIFSEM (140 aa)) form the C2 tensin-type domain. Disordered stretches follow at residues 429–463 (ISEN…SILK) and 482–729 (KIFS…KGRG). Over residues 441–450 (SPEKEKDTMS) the composition is skewed to basic and acidic residues. Over residues 491-522 (SPVTSPLPNRSPTQGSPASISRFHSSPSSLGI) the composition is skewed to polar residues. Basic and acidic residues predominate over residues 526–536 (LHDHGSCKDEE). The segment covering 538-548 (TSSSPASPSIS) has biased composition (low complexity). A compositionally biased stretch (polar residues) spans 555–580 (PLTSSQPKKASPQCPQSPTPVHSNGP). Residues 603–613 (RPPPPPPPPPI) are compositionally biased toward pro residues. Residues 614 to 629 (SSLRSTPSPSSTSNSI) show a composition bias toward low complexity. Over residues 633–643 (GPPPPPPPPPL) the composition is skewed to pro residues. The segment covering 644–653 (QSHRSALSSS) has biased composition (low complexity). Positions 669 to 678 (NPPPPPPPPL) are enriched in pro residues. Residues 679–695 (HSNSRMGAPTSSLVLKS) show a composition bias toward low complexity. Residues 696 to 705 (PPVPPPPAPA) show a composition bias toward pro residues. Residues 735–1135 (KGQGQTRKAN…RAQKEAENEK (401 aa)) form the FH2 domain.

The protein belongs to the formin-like family. Class-II subfamily.

The chain is Formin-like protein 18 (FH18) from Arabidopsis thaliana (Mouse-ear cress).